A 96-amino-acid chain; its full sequence is Large ribosomal subunit protein bL25 (96 aa).

The protein belongs to the bacterial ribosomal protein bL25 family. Part of the 50S ribosomal subunit; part of the 5S rRNA/L5/L18/L25 subcomplex. Contacts the 5S rRNA. Binds to the 5S rRNA independently of L5 and L18.

Its function is as follows. This is one of the proteins that binds to the 5S RNA in the ribosome where it forms part of the central protuberance. The polypeptide is Large ribosomal subunit protein bL25 (Buchnera aphidicola subsp. Schizaphis graminum (strain Sg)).